Here is a 443-residue protein sequence, read N- to C-terminus: Dynein regulatory complex protein 9 (443 aa).

2 disordered regions span residues 1–34 (MEED…TVEE) and 415–443 (GFKM…GKKK). One can recognise an IQ domain in the interval 393 to 422 (ELKSVIKLQAWWRGTMIRREIGGFKMPKDK). A compositionally biased stretch (basic and acidic residues) spans 415–430 (GFKMPKDKVDSKDSKG). Over residues 431–443 (KGKGKDKRRGKKK) the composition is skewed to basic residues.

This sequence belongs to the DRC9 family. In terms of assembly, component of the nexin-dynein regulatory complex (N-DRC). Interacts (via IQ domain) with CALM when calcium levels are low. Does not interact with CALM in the presence of Ca(2+). Interacts with the HSP70 proteins HSPA1L and HSPA8. May form a complex with CAMK4 and HSP70.

Its subcellular location is the cytoplasm. It is found in the cell projection. The protein resides in the cilium. It localises to the flagellum. The protein localises to the cytoskeleton. Its subcellular location is the flagellum axoneme. Functionally, component of the nexin-dynein regulatory complex (N-DRC), a key regulator of ciliary/flagellar motility which maintains the alignment and integrity of the distal axoneme and regulates microtubule sliding in motile axonemes. Binds calmodulin when cellular Ca(2+) levels are low and thereby contributes to the regulation of calcium and calmodulin-dependent protein kinase IV (CAMK4) activity; contributes to the regulation of CAMK4 signaling cascades. Required for normal axoneme assembly in sperm flagella, normal sperm tail formation and for male fertility. This is Dynein regulatory complex protein 9 (IQCG) from Homo sapiens (Human).